Consider the following 112-residue polypeptide: MSAESPEPASAEEQKEMEDKVISPEKAEEAKLKARYPHLGQKPGGSDFLRKRLQKGQKYFDSGDYNMAKAKMKNKQLPTAAPDKTEVTGDHIPTPQDLPQRKPSLVASKLAG.

Low complexity predominate over residues Met1–Ala11. The segment at Met1 to Phe48 is disordered. Ser2 is subject to N-acetylserine. Residues Glu12 to Leu32 are compositionally biased toward basic and acidic residues. Phosphoserine; by GWL occurs at positions 62 and 104. Residues Lys73 to Gly112 are disordered. Ser104 carries the phosphoserine; by PKA modification.

The protein belongs to the endosulfine family. In terms of assembly, interacts (when phosphorylated at Ser-62) with PPP2R2D. Post-translationally, phosphorylation at Ser-62 by MASTL/GWL during mitosis is essential for interaction with PPP2R2D (PR55-delta) and subsequent inactivation of PP2A.

Its subcellular location is the cytoplasm. Its function is as follows. Protein phosphatase inhibitor that specifically inhibits protein phosphatase 2A (PP2A) during mitosis. Inhibition of PP2A is enhanced when ARPP19 is phosphorylated. When phosphorylated at Ser-62 during mitosis, specifically interacts with PPP2R2D (PR55-delta) and inhibits its activity, leading to inactivation of PP2A, an essential condition to keep cyclin-B1-CDK1 activity high during M phase. The chain is cAMP-regulated phosphoprotein 19 (ARPP19) from Gallus gallus (Chicken).